We begin with the raw amino-acid sequence, 68 residues long: Large ribosomal subunit protein uL29 (68 aa).

The protein belongs to the universal ribosomal protein uL29 family.

This Bradyrhizobium diazoefficiens (strain JCM 10833 / BCRC 13528 / IAM 13628 / NBRC 14792 / USDA 110) protein is Large ribosomal subunit protein uL29.